A 269-amino-acid polypeptide reads, in one-letter code: Probable 3-deoxy-manno-octulosonic acid transferase (269 aa).

It localises to the cytoplasm. The catalysed reaction is an alpha-Kdo-(2-&gt;4)-alpha-Kdo-(2-&gt;6)-lipid IVA + CMP-3-deoxy-beta-D-manno-octulosonate = an alpha-Kdo-(2-&gt;4)-alpha-Kdo-(2-&gt;4)-alpha-Kdo-(2-&gt;6)-lipid IVA + CMP + H(+). It participates in bacterial outer membrane biogenesis; LPS core biosynthesis. Functionally, involved in the biosynthesis of the core oligosaccharide region of lipopolysaccharide (LPS). Required for the addition of 3-deoxy-D-manno-oct-2-ulosonic acid III (KdoIII) to the KdoII residue of the inner lipopolysaccharide core. This chain is Probable 3-deoxy-manno-octulosonic acid transferase, found in Salmonella typhimurium (strain LT2 / SGSC1412 / ATCC 700720).